Here is a 125-residue protein sequence, read N- to C-terminus: UPF0593 mitochondrial protein C806.05 (125 aa).

This sequence belongs to the UPF0593 family.

The protein resides in the mitochondrion. The protein is UPF0593 mitochondrial protein C806.05 of Schizosaccharomyces pombe (strain 972 / ATCC 24843) (Fission yeast).